Here is a 682-residue protein sequence, read N- to C-terminus: Methionine synthase reductase (682 aa).

The 144-residue stretch at 4-147 (FLIAFGSQTG…EVEPWIEKFF (144 aa)) folds into the Flavodoxin-like domain. 93 to 124 (LLGLGDSNYSSYQTIPRKIDKQLTALGANRLF) is a binding site for FMN. One can recognise an FAD-binding FR-type domain in the interval 271-516 (TKPFEVLVVS…GKEPARFRLP (246 aa)). Lys-293 serves as a coordination point for NADP(+). Residues 455 to 458 (RPYS) and 488 to 491 (GLAT) each bind FAD. Residues 607 to 609 (RVQ) and Asp-643 each bind NADP(+). Residue Trp-681 participates in FAD binding.

It depends on FAD as a cofactor. The cofactor is FMN.

It carries out the reaction 2 methylcob(III)alamin-[methionine synthase] + 2 S-adenosyl-L-homocysteine + NADP(+) + H(+) = 2 cob(II)alamin-[methionine synthase] + 2 S-adenosyl-L-methionine + NADPH. In terms of biological role, involved in the reductive regeneration of cob(I)alamin cofactor required for the maintenance of methionine synthase in a functional state. In Caenorhabditis elegans, this protein is Methionine synthase reductase.